The chain runs to 110 residues: UPF0060 membrane protein ASA_2267 (110 aa).

A run of 4 helical transmembrane segments spans residues 7-27, 33-53, 63-83, and 87-107; these read IGLFLITAVAEIVGCYLPYLW, SVWLLLPAGLSLVLFAWLLSL, AAYGGVYIFVAILWLWLVDGI, and LWDLVGSLVALFGMAIIMFAP.

Belongs to the UPF0060 family.

The protein resides in the cell inner membrane. This is UPF0060 membrane protein ASA_2267 from Aeromonas salmonicida (strain A449).